The sequence spans 374 residues: Cyclin-dependent kinase 9 (374 aa).

In terms of domain architecture, Protein kinase spans 19-318 (YEKLAKIGQG…SDDALNHDFF (300 aa)). Residues 25 to 33 (IGQGTFGEV) and lysine 48 each bind ATP. Aspartate 151 serves as the catalytic Proton acceptor. The segment at 345–374 (PRRRGHMPQQPANQNRNPATTSQSEFDRVF) is disordered. Polar residues predominate over residues 354–368 (QPANQNRNPATTSQS).

It belongs to the protein kinase superfamily. CMGC Ser/Thr protein kinase family. CDC2/CDKX subfamily. As to quaternary structure, component of the super elongation complex (SEC). Associates with ccnt1/cyclin-T1, ccnt2/cyclin-T2 or ccnk/cyclin-K to form active P-TEFb.

The protein localises to the nucleus. It is found in the cytoplasm. Its subcellular location is the PML body. The catalysed reaction is L-seryl-[protein] + ATP = O-phospho-L-seryl-[protein] + ADP + H(+). The enzyme catalyses L-threonyl-[protein] + ATP = O-phospho-L-threonyl-[protein] + ADP + H(+). It catalyses the reaction [DNA-directed RNA polymerase] + ATP = phospho-[DNA-directed RNA polymerase] + ADP + H(+). Its function is as follows. Protein kinase involved in the regulation of transcription. Member of the cyclin-dependent kinase pair (CDK9/cyclin-T) complex, also called positive transcription elongation factor b (P-TEFb), which facilitates the transition from abortive to productive elongation by phosphorylating the CTD (C-terminal domain) of the large subunit of RNA polymerase II (RNAP II) polr2a, supt5h and rdbp. This complex is inactive when in the 7SK snRNP complex form. Regulates cytokine inducible transcription networks by facilitating promoter recognition of target transcription factors. P-TEFb is also involved in cotranscriptional histone modification, mRNA processing and mRNA export. The sequence is that of Cyclin-dependent kinase 9 from Danio rerio (Zebrafish).